The sequence spans 353 residues: Protein RecA (353 aa).

ATP is bound at residue 67-74 (GPESSGKT). The segment at 330-353 (SNPNSTPDFSVDDSEGVAETNEDF) is disordered. Positions 339–353 (SVDDSEGVAETNEDF) are enriched in acidic residues.

This sequence belongs to the RecA family.

The protein localises to the cytoplasm. Functionally, can catalyze the hydrolysis of ATP in the presence of single-stranded DNA, the ATP-dependent uptake of single-stranded DNA by duplex DNA, and the ATP-dependent hybridization of homologous single-stranded DNAs. It interacts with LexA causing its activation and leading to its autocatalytic cleavage. In Shigella sonnei, this protein is Protein RecA.